The sequence spans 37 residues: Beta-2-microglobulin (37 aa).

In terms of domain architecture, Ig-like C1-type spans 11-37 (GKEDVLICHVSNFHPPDITITLLKNGE).

This sequence belongs to the beta-2-microglobulin family. As to quaternary structure, heterodimer of an alpha chain and a beta chain. Beta-2-microglobulin is the beta-chain of major histocompatibility complex class I molecules.

The protein localises to the secreted. In terms of biological role, component of the class I major histocompatibility complex (MHC). Involved in the presentation of peptide antigens to the immune system. The protein is Beta-2-microglobulin (b2m) of Oreochromis niloticus (Nile tilapia).